Here is a 278-residue protein sequence, read N- to C-terminus: Ankyrin repeat and SOCS box protein 13 (278 aa).

ANK repeat units follow at residues 18 to 47 (VERT…CVNQ), 51 to 80 (DSIT…QVDA), 84 to 113 (DGST…KVNP), 116 to 145 (YTAS…NLEA), 149 to 178 (HFGT…NVNA), and 181 to 210 (LHET…NIYA). In terms of domain architecture, SOCS box spans 229 to 278 (AKCFEYYEKTPLSLSQLCRVSLRKATGVRGLEKVAKLNIPPRLIDYLSYN).

It belongs to the ankyrin SOCS box (ASB) family.

It functions in the pathway protein modification; protein ubiquitination. Its function is as follows. May be a substrate-recognition component of a SCF-like ECS (Elongin-Cullin-SOCS-box protein) E3 ubiquitin-protein ligase complex which mediates the ubiquitination and subsequent proteasomal degradation of target proteins. The chain is Ankyrin repeat and SOCS box protein 13 (Asb13) from Mus musculus (Mouse).